Consider the following 550-residue polypeptide: Hydroxylamine reductase (550 aa).

The [2Fe-2S] cluster site is built by Cys3, Cys6, Cys18, and Cys25. Residues His249, Glu273, Cys317, Cys405, Cys433, Cys458, Glu492, and Lys494 each contribute to the hybrid [4Fe-2O-2S] cluster site. A Cysteine persulfide modification is found at Cys405.

Belongs to the HCP family. [2Fe-2S] cluster is required as a cofactor. Hybrid [4Fe-2O-2S] cluster serves as cofactor.

Its subcellular location is the cytoplasm. It carries out the reaction A + NH4(+) + H2O = hydroxylamine + AH2 + H(+). In terms of biological role, catalyzes the reduction of hydroxylamine to form NH(3) and H(2)O. The polypeptide is Hydroxylamine reductase (Enterobacter sp. (strain 638)).